The sequence spans 143 residues: Nucleoside diphosphate kinase (143 aa).

The ATP site is built by K11, F59, R87, T93, R104, and N114. H117 functions as the Pros-phosphohistidine intermediate in the catalytic mechanism.

It belongs to the NDK family. In terms of assembly, homotetramer. Mg(2+) serves as cofactor.

It localises to the cytoplasm. It carries out the reaction a 2'-deoxyribonucleoside 5'-diphosphate + ATP = a 2'-deoxyribonucleoside 5'-triphosphate + ADP. It catalyses the reaction a ribonucleoside 5'-diphosphate + ATP = a ribonucleoside 5'-triphosphate + ADP. In terms of biological role, major role in the synthesis of nucleoside triphosphates other than ATP. The ATP gamma phosphate is transferred to the NDP beta phosphate via a ping-pong mechanism, using a phosphorylated active-site intermediate. The chain is Nucleoside diphosphate kinase from Shewanella oneidensis (strain ATCC 700550 / JCM 31522 / CIP 106686 / LMG 19005 / NCIMB 14063 / MR-1).